The following is an 865-amino-acid chain: Outer membrane usher protein HtrE (865 aa).

An N-terminal signal peptide occupies residues 1-29; it reads MTIEYTKNYHHLTRIATFCALLYCNTAFS. A disulfide bond links Cys-838 and Cys-862.

Belongs to the fimbrial export usher family.

Its subcellular location is the cell outer membrane. In terms of biological role, part of the yadCKLM-htrE-yadVN fimbrial operon. Could contribute to adhesion to various surfaces in specific environmental niches. Probably involved in the export and assembly of fimbrial subunits across the outer membrane. In Escherichia coli (strain K12), this protein is Outer membrane usher protein HtrE (htrE).